Consider the following 592-residue polypeptide: Hepatocyte nuclear factor 1-alpha-B (592 aa).

The dimerization stretch occupies residues 1 to 31; it reads MASQLSYLQQELLRALLESGVTKEALKKALA. An HNF-p1 domain is found at 1–32; the sequence is MASQLSYLQQELLRALLESGVTKEALKKALAD. A disordered region spans residues 54–78; the sequence is NCVQLPNGLGEPQMSEDESSDDGGD. Over residues 67 to 77 the composition is skewed to acidic residues; sequence MSEDESSDDGG. One can recognise a POU-specific atypical domain in the interval 85 to 180; it reads KELERLSPEE…IARQFTHAGH (96 aa). 6 interaction with DNA regions span residues 128–130, 141–147, 153–156, 201–204, 261–263, and 268–271; these read QRE, HLSQHLN, KTQK, RFKW, RVY, and NSGK. The Nuclear localization signal signature appears at 195 to 203; that stretch reads KKMRRNRFK. Residues 197 to 277 constitute a DNA-binding region (homeobox; HNF1-type); that stretch reads MRRNRFKWGP…NSGKEEAFRH (81 aa). Polar residues-rich tracts occupy residues 284-295 and 306-328; these read YNGQQSSAQPLS and RYTQDSSTDRSAAMANSQSTLSP. 2 disordered regions span residues 284 to 329 and 511 to 533; these read YNGQ…LSPS and KQVVSHHPTAHGDSPGSQLHNQD.

The protein belongs to the HNF1 homeobox family. In terms of assembly, binds DNA as dimer. Forms a homodimer or heterodimer with HNF1-alpha-A. Potentially also form a heterodimer with HNF1-beta. Liver.

Its subcellular location is the nucleus. Its function is as follows. Transcriptional activator that regulates the tissue specific expression of multiple genes, especially in pancreas and liver. Binds to the hepatocyte specific promoter element HP1. Binds to the inverted palindrome 5'-GTTAATNATTAAC-3'. The sequence is that of Hepatocyte nuclear factor 1-alpha-B (hnf1a-b) from Xenopus laevis (African clawed frog).